The chain runs to 159 residues: Transcription elongation factor GreA (159 aa).

Residues 5–77 (REVVLTAQGL…LETMLRKAVI (73 aa)) are a coiled coil.

This sequence belongs to the GreA/GreB family.

Its function is as follows. Necessary for efficient RNA polymerase transcription elongation past template-encoded arresting sites. The arresting sites in DNA have the property of trapping a certain fraction of elongating RNA polymerases that pass through, resulting in locked ternary complexes. Cleavage of the nascent transcript by cleavage factors such as GreA or GreB allows the resumption of elongation from the new 3'terminus. GreA releases sequences of 2 to 3 nucleotides. The protein is Transcription elongation factor GreA of Alkaliphilus oremlandii (strain OhILAs) (Clostridium oremlandii (strain OhILAs)).